Reading from the N-terminus, the 594-residue chain is DNA ligase 2 (594 aa).

Glu-250 is a binding site for ATP. Lys-252 serves as the catalytic N6-AMP-lysine intermediate. Positions 257, 273, 303, 343, 419, and 425 each coordinate ATP.

Belongs to the ATP-dependent DNA ligase family. Requires Mg(2+) as cofactor.

It catalyses the reaction ATP + (deoxyribonucleotide)n-3'-hydroxyl + 5'-phospho-(deoxyribonucleotide)m = (deoxyribonucleotide)n+m + AMP + diphosphate.. In terms of biological role, DNA ligase that seals nicks in double-stranded DNA during DNA replication, DNA recombination and DNA repair. In Korarchaeum cryptofilum (strain OPF8), this protein is DNA ligase 2.